A 114-amino-acid chain; its full sequence is Nucleoid-associated protein Cyan7425_0899 (114 aa).

The protein belongs to the YbaB/EbfC family. In terms of assembly, homodimer.

It is found in the cytoplasm. The protein resides in the nucleoid. In terms of biological role, binds to DNA and alters its conformation. May be involved in regulation of gene expression, nucleoid organization and DNA protection. The protein is Nucleoid-associated protein Cyan7425_0899 of Cyanothece sp. (strain PCC 7425 / ATCC 29141).